Here is a 264-residue protein sequence, read N- to C-terminus: 3-methyl-2-oxobutanoate hydroxymethyltransferase (264 aa).

Asp-45 and Asp-84 together coordinate Mg(2+). Residues 45–46 (DS), Asp-84, and Lys-112 contribute to the 3-methyl-2-oxobutanoate site. Glu-114 is a binding site for Mg(2+). Glu-181 (proton acceptor) is an active-site residue.

The protein belongs to the PanB family. In terms of assembly, homodecamer; pentamer of dimers. It depends on Mg(2+) as a cofactor.

It localises to the cytoplasm. The catalysed reaction is 3-methyl-2-oxobutanoate + (6R)-5,10-methylene-5,6,7,8-tetrahydrofolate + H2O = 2-dehydropantoate + (6S)-5,6,7,8-tetrahydrofolate. The protein operates within cofactor biosynthesis; (R)-pantothenate biosynthesis; (R)-pantoate from 3-methyl-2-oxobutanoate: step 1/2. Its function is as follows. Catalyzes the reversible reaction in which hydroxymethyl group from 5,10-methylenetetrahydrofolate is transferred onto alpha-ketoisovalerate to form ketopantoate. This chain is 3-methyl-2-oxobutanoate hydroxymethyltransferase, found in Aeromonas salmonicida (strain A449).